Here is a 452-residue protein sequence, read N- to C-terminus: MKVISNFQNKKILILGLAKSGEAAAKLLTKLGALVTVNDSKPFDQNPAAQALLEEGIKVICGSHPVELLDENFEYMVKNPGIPYDNPMVKRALAKEIPILTEVELAYFVSEAPIIGITGSNGKTTTTTMIADVLNAGGQSALLSGNIGYPASKVVQKAIAGDTLVMELSSFQLVGVNAFRPHIAVITNLMPTHLDYHGSFEDYVAAKWMIQAQMTESDYLILNANQEISATLAKTTKATVIPFSTQKVVDGAYLNDGILYFKEQAIIAATDLGVPGSHNIENALATIAVAKLSGIADDIIAQCLSHFGGVKHRLQRVGQIKDITFYNDSKSTNILATKKALSGFDNSRLILIAGGLDRGNEFDDLVPDLLGLKQMIILGESAERMKRAANKAEVSYLEARNVAEATELAFKLAQTGDTILLSPANASWDMYPNFEVRGDEFLATFDCLRGDA.

Glycine 119–threonine 125 is an ATP binding site.

Belongs to the MurCDEF family.

It localises to the cytoplasm. It catalyses the reaction UDP-N-acetyl-alpha-D-muramoyl-L-alanine + D-glutamate + ATP = UDP-N-acetyl-alpha-D-muramoyl-L-alanyl-D-glutamate + ADP + phosphate + H(+). It functions in the pathway cell wall biogenesis; peptidoglycan biosynthesis. Its function is as follows. Cell wall formation. Catalyzes the addition of glutamate to the nucleotide precursor UDP-N-acetylmuramoyl-L-alanine (UMA). This chain is UDP-N-acetylmuramoylalanine--D-glutamate ligase, found in Streptococcus pyogenes serotype M12 (strain MGAS9429).